Here is a 322-residue protein sequence, read N- to C-terminus: NAD(P)H-dependent D-xylose reductase (322 aa).

The active-site Proton donor is the tyrosine 52. Histidine 114 contacts substrate. NAD(+) is bound by residues 169–170 (SN), 218–227 (SSFGPQSFVE), and 274–284 (KSNLPERLVQN).

It belongs to the aldo/keto reductase family. In terms of assembly, homodimer.

The catalysed reaction is xylitol + NAD(+) = D-xylose + NADH + H(+). It catalyses the reaction xylitol + NADP(+) = D-xylose + NADPH + H(+). It participates in carbohydrate metabolism; D-xylose degradation. In terms of biological role, reduces D-xylose into xylitol. Has a preference for NADPH, but can also utilize NADH as cosubstrate. The sequence is that of NAD(P)H-dependent D-xylose reductase (XYL1) from Candida tenuis (Yeast).